The primary structure comprises 331 residues: Biotin synthase (331 aa).

The Radical SAM core domain occupies 52-277 (PDVEVEGIIS…RTMLRFAGGR (226 aa)). [4Fe-4S] cluster contacts are provided by Cys-67, Cys-71, and Cys-74. [2Fe-2S] cluster contacts are provided by Cys-110, Cys-143, Cys-202, and Arg-272.

Belongs to the radical SAM superfamily. Biotin synthase family. Homodimer. [4Fe-4S] cluster is required as a cofactor. [2Fe-2S] cluster serves as cofactor.

It catalyses the reaction (4R,5S)-dethiobiotin + (sulfur carrier)-SH + 2 reduced [2Fe-2S]-[ferredoxin] + 2 S-adenosyl-L-methionine = (sulfur carrier)-H + biotin + 2 5'-deoxyadenosine + 2 L-methionine + 2 oxidized [2Fe-2S]-[ferredoxin]. It functions in the pathway cofactor biosynthesis; biotin biosynthesis; biotin from 7,8-diaminononanoate: step 2/2. Its function is as follows. Catalyzes the conversion of dethiobiotin (DTB) to biotin by the insertion of a sulfur atom into dethiobiotin via a radical-based mechanism. The chain is Biotin synthase from Mycolicibacterium vanbaalenii (strain DSM 7251 / JCM 13017 / BCRC 16820 / KCTC 9966 / NRRL B-24157 / PYR-1) (Mycobacterium vanbaalenii).